The sequence spans 1118 residues: Isoleucine--tRNA ligase (1118 aa).

A 'HIGH' region motif is present at residues 64 to 74 (PFANGLPHYGH). Residues 647–651 (KLSKR) carry the 'KMSKS' region motif. Lysine 650 contributes to the ATP binding site.

Belongs to the class-I aminoacyl-tRNA synthetase family. IleS type 2 subfamily. Monomer. It depends on Zn(2+) as a cofactor.

The protein localises to the cytoplasm. It carries out the reaction tRNA(Ile) + L-isoleucine + ATP = L-isoleucyl-tRNA(Ile) + AMP + diphosphate. In terms of biological role, catalyzes the attachment of isoleucine to tRNA(Ile). As IleRS can inadvertently accommodate and process structurally similar amino acids such as valine, to avoid such errors it has two additional distinct tRNA(Ile)-dependent editing activities. One activity is designated as 'pretransfer' editing and involves the hydrolysis of activated Val-AMP. The other activity is designated 'posttransfer' editing and involves deacylation of mischarged Val-tRNA(Ile). This is Isoleucine--tRNA ligase from Ehrlichia ruminantium (strain Gardel).